A 452-amino-acid polypeptide reads, in one-letter code: Phosphoglucosamine mutase (452 aa).

The Phosphoserine intermediate role is filled by Ser104. Ser104, Asp246, Asp248, and Asp250 together coordinate Mg(2+). Ser104 is subject to Phosphoserine.

Belongs to the phosphohexose mutase family. Mg(2+) is required as a cofactor. Activated by phosphorylation.

It carries out the reaction alpha-D-glucosamine 1-phosphate = D-glucosamine 6-phosphate. Its function is as follows. Catalyzes the conversion of glucosamine-6-phosphate to glucosamine-1-phosphate. In Streptomyces coelicolor (strain ATCC BAA-471 / A3(2) / M145), this protein is Phosphoglucosamine mutase.